A 72-amino-acid chain; its full sequence is MAREDLIEVEAKVKEILPNTKFIVELDNGHTVVAHVSGKIRIHNIRILPGDKVTVELSPYDLSRGRITYRKK.

In terms of domain architecture, S1-like spans 1–72; it reads MAREDLIEVE…SRGRITYRKK (72 aa).

The protein belongs to the IF-1 family. As to quaternary structure, component of the 30S ribosomal translation pre-initiation complex which assembles on the 30S ribosome in the order IF-2 and IF-3, IF-1 and N-formylmethionyl-tRNA(fMet); mRNA recruitment can occur at any time during PIC assembly.

It localises to the cytoplasm. In terms of biological role, one of the essential components for the initiation of protein synthesis. Stabilizes the binding of IF-2 and IF-3 on the 30S subunit to which N-formylmethionyl-tRNA(fMet) subsequently binds. Helps modulate mRNA selection, yielding the 30S pre-initiation complex (PIC). Upon addition of the 50S ribosomal subunit IF-1, IF-2 and IF-3 are released leaving the mature 70S translation initiation complex. This Acholeplasma laidlawii (strain PG-8A) protein is Translation initiation factor IF-1.